The chain runs to 236 residues: Thiamine import ATP-binding protein ThiQ (236 aa).

In terms of domain architecture, ABC transporter spans 2–230; the sequence is LKLEKITYLY…SAAKASVLGI (229 aa). Position 32 to 39 (32 to 39) interacts with ATP; that stretch reads GPSGAGKS.

The protein belongs to the ABC transporter superfamily. Thiamine importer (TC 3.A.1.19.1) family. The complex is composed of two ATP-binding proteins (ThiQ), two transmembrane proteins (ThiP) and a solute-binding protein (ThiB).

The protein resides in the cell inner membrane. It carries out the reaction thiamine(out) + ATP + H2O = thiamine(in) + ADP + phosphate + H(+). Its function is as follows. Part of the ABC transporter complex ThiBPQ involved in thiamine import. Responsible for energy coupling to the transport system. In Yersinia pseudotuberculosis serotype I (strain IP32953), this protein is Thiamine import ATP-binding protein ThiQ.